The sequence spans 264 residues: Glutamate racemase (264 aa).

Residues 12–13 (DS) and 44–45 (YG) contribute to the substrate site. The active-site Proton donor/acceptor is the cysteine 76. A substrate-binding site is contributed by 77-78 (NT). Catalysis depends on cysteine 186, which acts as the Proton donor/acceptor. Residue 187 to 188 (TH) coordinates substrate.

This sequence belongs to the aspartate/glutamate racemases family.

It carries out the reaction L-glutamate = D-glutamate. It participates in cell wall biogenesis; peptidoglycan biosynthesis. Its function is as follows. Provides the (R)-glutamate required for cell wall biosynthesis. This is Glutamate racemase from Fusobacterium nucleatum subsp. nucleatum (strain ATCC 25586 / DSM 15643 / BCRC 10681 / CIP 101130 / JCM 8532 / KCTC 2640 / LMG 13131 / VPI 4355).